Here is a 566-residue protein sequence, read N- to C-terminus: Membrane protein insertase YidC (566 aa).

A helical membrane pass occupies residues 6–26 (NLLLLALLFVSFLLYTAWVEE). The segment at 30–80 (QVAPQVQTEQVDSSVPASVASSANSANLSDGVPNSPQQSSTDATSTELPAS) is disordered. A compositionally biased stretch (polar residues) spans 31–41 (VAPQVQTEQVD). The span at 42–58 (SSVPASVASSANSANLS) shows a compositional bias: low complexity. The span at 61–80 (VPNSPQQSSTDATSTELPAS) shows a compositional bias: polar residues. A run of 4 helical transmembrane segments spans residues 356–376 (LLLF…LITF), 433–453 (LGGC…YWSL), 471–491 (LSVQ…MFFI), and 510–530 (FMPV…VLYW).

This sequence belongs to the OXA1/ALB3/YidC family. Type 1 subfamily. Interacts with the Sec translocase complex via SecD. Specifically interacts with transmembrane segments of nascent integral membrane proteins during membrane integration.

It localises to the cell inner membrane. Its function is as follows. Required for the insertion and/or proper folding and/or complex formation of integral membrane proteins into the membrane. Involved in integration of membrane proteins that insert both dependently and independently of the Sec translocase complex, as well as at least some lipoproteins. Aids folding of multispanning membrane proteins. In Psychromonas ingrahamii (strain DSM 17664 / CCUG 51855 / 37), this protein is Membrane protein insertase YidC.